A 222-amino-acid polypeptide reads, in one-letter code: FCS-Like Zinc finger 13 (222 aa).

The segment at E149–E192 adopts an FLZ-type zinc-finger fold.

This sequence belongs to the FLZ family. In terms of assembly, interacts with KIN10 and KIN11 via its FLZ-type zinc finger domain. Interacts with KINB1, KINB2, KINB3 and SNF4 via its N-terminal part.

The protein resides in the nucleus. Its subcellular location is the cytoplasm. May act as an adapter to facilitate the interaction of SnRK1 complex with effector proteins, conferring tissue- and stimulus-type specific differences in the SnRK1 regulation pathway. This is FCS-Like Zinc finger 13 from Arabidopsis thaliana (Mouse-ear cress).